Here is a 274-residue protein sequence, read N- to C-terminus: Large ribosomal subunit protein uL2 (274 aa).

Residues 224-259 (AMNPVDHPHGGGEGRTSGGRHPVTPWGIPTKGYKTR) form a disordered region.

Belongs to the universal ribosomal protein uL2 family. As to quaternary structure, part of the 50S ribosomal subunit. Forms a bridge to the 30S subunit in the 70S ribosome.

Its function is as follows. One of the primary rRNA binding proteins. Required for association of the 30S and 50S subunits to form the 70S ribosome, for tRNA binding and peptide bond formation. It has been suggested to have peptidyltransferase activity; this is somewhat controversial. Makes several contacts with the 16S rRNA in the 70S ribosome. The protein is Large ribosomal subunit protein uL2 of Citrifermentans bemidjiense (strain ATCC BAA-1014 / DSM 16622 / JCM 12645 / Bem) (Geobacter bemidjiensis).